We begin with the raw amino-acid sequence, 248 residues long: Granzyme-like protein 2 (248 aa).

Positions 1–18 (MFLFLIFLVAVLPVNTEG) are cleaved as a signal peptide. The propeptide at 19 to 20 (GE) is activation peptide. The 223-residue stretch at 21 to 243 (IVWGTESKPH…FIPWIQKTMK (223 aa)) folds into the Peptidase S1 domain. Cysteine 50 and cysteine 66 are disulfide-bonded. Catalysis depends on charge relay system residues histidine 65 and aspartate 108. 2 disulfide bridges follow: cysteine 142/cysteine 207 and cysteine 172/cysteine 186. 2 N-linked (GlcNAc...) asparagine glycosylation sites follow: asparagine 152 and asparagine 180. Residue serine 201 is the Charge relay system of the active site.

It belongs to the peptidase S1 family. Granzyme subfamily. Duodenum, lung and spleen.

Functionally, this enzyme is necessary for target cell lysis in cell-mediated immune responses. The polypeptide is Granzyme-like protein 2 (Rattus norvegicus (Rat)).